A 338-amino-acid polypeptide reads, in one-letter code: Glutamate/glutamine/aspartate/asparagine-binding protein BztA (338 aa).

The signal sequence occupies residues 1 to 22 (MKKSAFFGSVALAALVAGAASA).

It belongs to the bacterial solute-binding protein 3 family.

It localises to the periplasm. Part of a binding-protein-dependent transport system for glutamate, glutamine, aspartate and asparagine. This chain is Glutamate/glutamine/aspartate/asparagine-binding protein BztA (bztA), found in Rhodobacter capsulatus (strain ATCC BAA-309 / NBRC 16581 / SB1003).